The sequence spans 382 residues: Homoserine O-succinyltransferase (382 aa).

The region spanning 51-359 (NAILVCHALS…EATQGHDAFL (309 aa)) is the AB hydrolase-1 domain. Serine 157 functions as the Nucleophile in the catalytic mechanism. Residue arginine 227 coordinates substrate. Catalysis depends on residues aspartate 322 and histidine 355. Residue aspartate 356 participates in substrate binding.

This sequence belongs to the AB hydrolase superfamily. MetX family. Homodimer.

The protein localises to the cytoplasm. It catalyses the reaction L-homoserine + succinyl-CoA = O-succinyl-L-homoserine + CoA. Its pathway is amino-acid biosynthesis; L-methionine biosynthesis via de novo pathway; O-succinyl-L-homoserine from L-homoserine: step 1/1. In terms of biological role, transfers a succinyl group from succinyl-CoA to L-homoserine, forming succinyl-L-homoserine. This Halorhodospira halophila (strain DSM 244 / SL1) (Ectothiorhodospira halophila (strain DSM 244 / SL1)) protein is Homoserine O-succinyltransferase.